A 329-amino-acid polypeptide reads, in one-letter code: Meiotic drive suppressor wtf21 (329 aa).

The disordered stretch occupies residues 1 to 68 (MKNNYTSLKS…RENNPSRSTD (68 aa)). Positions 19–30 (KTDHEIDLEKGP) are enriched in basic and acidic residues. Helical transmembrane passes span 73–95 (FLIK…ICYL), 110–132 (WTLF…YFYE), 165–182 (IIIW…FVYI), 192–214 (ALIC…VCIP), and 290–312 (GIAF…IRGA).

It belongs to the WTF family. Homomer. Interacts with other proteins that exhibit high sequence similarity.

The protein resides in the spore membrane. It is found in the vacuole membrane. In terms of biological role, acts as a suppressor component of the dual wtf meiotic drive system, and can suppress but not confer meiotic drive by compatible poisons. Wtf meiotic drive systems promote unequal transmission of alleles from the parental zygote to progeny spores by encoding a poison and an antidote from the same locus; the poison is trans-acting and forms toxic aggregates in all spores within an ascus, wherease the antidote is spore-specific and targets aggregates for degradation by the vacuole. Meiotic drive by wtf systems therefore lead to poisoning of all progeny that do not inherit the dual poison/antidote allele, or express a compatible antidote. In Schizosaccharomyces pombe (strain 972 / ATCC 24843) (Fission yeast), this protein is Meiotic drive suppressor wtf21.